The following is a 949-amino-acid chain: Sensor histidine kinase RcsC (949 aa).

Residues 1–19 lie on the Cytoplasmic side of the membrane; sequence MKYLASFRTTLKASRYMFR. Residues 20 to 41 traverse the membrane as a helical segment; that stretch reads ALALVLWLLIAFSSVFYIVNAL. Residues 42-313 are Periplasmic-facing; sequence HQRESEIRQE…PVDKVLERIR (272 aa). Residues 314 to 335 traverse the membrane as a helical segment; that stretch reads MVILNAILLNVLAGAALFTLAR. Topologically, residues 336-949 are cytoplasmic; it reads MYERRIFIPA…AERVRKSRES (614 aa). A PAS domain is found at 357–425; the sequence is QFNRKIVASA…VLTSNNTNLQ (69 aa). The region spanning 476 to 692 is the Histidine kinase domain; that stretch reads TVSHELRTPL…QFTVRIPLYG (217 aa). A Phosphohistidine; by autocatalysis modification is found at H479. Positions 705-805 constitute an ABL domain; it reads SGKRCWLAVR…ARIYLIEMES (101 aa). One can recognise a Response regulatory domain in the interval 826–940; sequence MILVVDDHPI…VIKQTLTVYA (115 aa). A 4-aspartylphosphate modification is found at D875.

Belongs to the RcsC family. Interacts with RcsD. Post-translationally, autophosphorylated. Activation probably requires a transfer of a phosphate group from a His in the transmitter domain to an Asp in the receiver domain.

The protein resides in the cell inner membrane. The enzyme catalyses ATP + protein L-histidine = ADP + protein N-phospho-L-histidine.. Component of the Rcs signaling system, which controls transcription of numerous genes. RcsC functions as a membrane-associated protein kinase that phosphorylates RcsD in response to environmental signals. The phosphoryl group is then transferred to the response regulator RcsB. Involved in regulation of K30 capsular polysaccharide synthesis. The protein is Sensor histidine kinase RcsC of Escherichia coli.